Consider the following 325-residue polypeptide: Elongation factor P--(R)-beta-lysine ligase (325 aa).

Substrate is bound at residue 76-78; the sequence is SPE. ATP-binding positions include 100–102 and N109; that span reads RNE. Residue Y118 participates in substrate binding. 244-245 provides a ligand contact to ATP; that stretch reads EL. E251 serves as a coordination point for substrate. An ATP-binding site is contributed by G300.

The protein belongs to the class-II aminoacyl-tRNA synthetase family. EpmA subfamily. In terms of assembly, homodimer.

The catalysed reaction is D-beta-lysine + L-lysyl-[protein] + ATP = N(6)-((3R)-3,6-diaminohexanoyl)-L-lysyl-[protein] + AMP + diphosphate + H(+). With EpmB is involved in the beta-lysylation step of the post-translational modification of translation elongation factor P (EF-P) on 'Lys-34'. Catalyzes the ATP-dependent activation of (R)-beta-lysine produced by EpmB, forming a lysyl-adenylate, from which the beta-lysyl moiety is then transferred to the epsilon-amino group of EF-P 'Lys-34'. This chain is Elongation factor P--(R)-beta-lysine ligase, found in Salmonella gallinarum (strain 287/91 / NCTC 13346).